Reading from the N-terminus, the 103-residue chain is Small ribosomal subunit protein uS10 (103 aa).

It belongs to the universal ribosomal protein uS10 family. As to quaternary structure, part of the 30S ribosomal subunit.

In terms of biological role, involved in the binding of tRNA to the ribosomes. In Blochmanniella pennsylvanica (strain BPEN), this protein is Small ribosomal subunit protein uS10.